Consider the following 367-residue polypeptide: D-alanine--D-alanine ligase (367 aa).

Positions 145 to 351 (KRLLRDAGLP…QPALMDALIA (207 aa)) constitute an ATP-grasp domain. 174–229 (HAVGCSELFIKPANLGSSVGISKARTPQEFAAACDLALRFDGKILIERCISPVREI) is a binding site for ATP. Mg(2+) contacts are provided by D306, E318, and N320.

This sequence belongs to the D-alanine--D-alanine ligase family. The cofactor is Mg(2+). It depends on Mn(2+) as a cofactor.

The protein localises to the cytoplasm. The catalysed reaction is 2 D-alanine + ATP = D-alanyl-D-alanine + ADP + phosphate + H(+). It participates in cell wall biogenesis; peptidoglycan biosynthesis. In terms of biological role, cell wall formation. This chain is D-alanine--D-alanine ligase, found in Bradyrhizobium sp. (strain BTAi1 / ATCC BAA-1182).